Reading from the N-terminus, the 332-residue chain is Transaldolase (332 aa).

Residue K135 is the Schiff-base intermediate with substrate of the active site.

This sequence belongs to the transaldolase family. Type 1 subfamily. Homodimer.

Its subcellular location is the cytoplasm. It carries out the reaction D-sedoheptulose 7-phosphate + D-glyceraldehyde 3-phosphate = D-erythrose 4-phosphate + beta-D-fructose 6-phosphate. It participates in carbohydrate degradation; pentose phosphate pathway; D-glyceraldehyde 3-phosphate and beta-D-fructose 6-phosphate from D-ribose 5-phosphate and D-xylulose 5-phosphate (non-oxidative stage): step 2/3. Its function is as follows. Transaldolase is important for the balance of metabolites in the pentose-phosphate pathway. This Prochlorococcus marinus (strain NATL2A) protein is Transaldolase.